Here is a 165-residue protein sequence, read N- to C-terminus: 6,7-dimethyl-8-ribityllumazine synthase (165 aa).

Residues F22, S56–E58, and A80–I82 contribute to the 5-amino-6-(D-ribitylamino)uracil site. E85–T86 contacts (2S)-2-hydroxy-3-oxobutyl phosphate. Catalysis depends on H88, which acts as the Proton donor. F113 lines the 5-amino-6-(D-ribitylamino)uracil pocket. R127 is a binding site for (2S)-2-hydroxy-3-oxobutyl phosphate.

It belongs to the DMRL synthase family.

The catalysed reaction is (2S)-2-hydroxy-3-oxobutyl phosphate + 5-amino-6-(D-ribitylamino)uracil = 6,7-dimethyl-8-(1-D-ribityl)lumazine + phosphate + 2 H2O + H(+). It functions in the pathway cofactor biosynthesis; riboflavin biosynthesis; riboflavin from 2-hydroxy-3-oxobutyl phosphate and 5-amino-6-(D-ribitylamino)uracil: step 1/2. In terms of biological role, catalyzes the formation of 6,7-dimethyl-8-ribityllumazine by condensation of 5-amino-6-(D-ribitylamino)uracil with 3,4-dihydroxy-2-butanone 4-phosphate. This is the penultimate step in the biosynthesis of riboflavin. The sequence is that of 6,7-dimethyl-8-ribityllumazine synthase from Thermotoga petrophila (strain ATCC BAA-488 / DSM 13995 / JCM 10881 / RKU-1).